Consider the following 403-residue polypeptide: Imidazolonepropionase (403 aa).

Residues histidine 68 and histidine 70 each contribute to the Fe(3+) site. Zn(2+) is bound by residues histidine 68 and histidine 70. Positions 77, 140, and 173 each coordinate 4-imidazolone-5-propanoate. Tyrosine 140 lines the N-formimidoyl-L-glutamate pocket. A Fe(3+)-binding site is contributed by histidine 238. Position 238 (histidine 238) interacts with Zn(2+). Glutamine 241 serves as a coordination point for 4-imidazolone-5-propanoate. Aspartate 313 contacts Fe(3+). Aspartate 313 provides a ligand contact to Zn(2+). N-formimidoyl-L-glutamate is bound by residues asparagine 315 and glycine 317. Residue threonine 318 participates in 4-imidazolone-5-propanoate binding.

It belongs to the metallo-dependent hydrolases superfamily. HutI family. Zn(2+) is required as a cofactor. The cofactor is Fe(3+).

The protein resides in the cytoplasm. It catalyses the reaction 4-imidazolone-5-propanoate + H2O = N-formimidoyl-L-glutamate. The protein operates within amino-acid degradation; L-histidine degradation into L-glutamate; N-formimidoyl-L-glutamate from L-histidine: step 3/3. Its function is as follows. Catalyzes the hydrolytic cleavage of the carbon-nitrogen bond in imidazolone-5-propanoate to yield N-formimidoyl-L-glutamate. It is the third step in the universal histidine degradation pathway. This Psychromonas ingrahamii (strain DSM 17664 / CCUG 51855 / 37) protein is Imidazolonepropionase.